Here is an 876-residue protein sequence, read N- to C-terminus: Dynein regulatory complex subunit 7 (876 aa).

Coiled-coil stretches lie at residues 1–33 (MEVL…ERVT) and 258–295 (KFEQ…AKPD). Residues 1–40 (MEVLREKVEEEEEAEREEAAERAERTEKLERVTKSAEVSR) form a disordered region. Residues 17–40 (EEAAERAERTEKLERVTKSAEVSR) are compositionally biased toward basic and acidic residues. Positions 385 to 412 (SLTEEDEEGLDDDDDDVEDLGKEEEDKS) are disordered. Acidic residues predominate over residues 387–407 (TEEDEEGLDDDDDDVEDLGKE). Coiled-coil stretches lie at residues 679-710 (QLKN…EEEE) and 784-809 (QRLI…KKQQ).

This sequence belongs to the DRC7 family. In terms of assembly, component of the nexin-dynein regulatory complex (N-DRC). Interacts with TCTE1/DRC5. Interacts with DRC3 and GAS8/DRC4. Expressed in diplotene and pachytene spermytocytes, and in round and elongating spermatids (at protein level). Strongly expressed in spleen and testis, faintly expressed in kidney, ovary and thymus. As to expression, abundantly expressed in the testis and is weakly expressed in the brain, thymus, lung and ovary. Expressed in ciliated cells.

It localises to the cell projection. Its subcellular location is the cilium. It is found in the flagellum. The protein resides in the cytoplasm. The protein localises to the cytoskeleton. It localises to the cilium axoneme. Its subcellular location is the flagellum axoneme. Functionally, component of the nexin-dynein regulatory complex (N-DRC) a key regulator of ciliary/flagellar motility which maintains the alignment and integrity of the distal axoneme and regulates microtubule sliding in motile axonemes. Essential for male fertility, sperm head morphogenesis and sperm flagellum formation. Not required for ciliogenesis in the brain and trachea. In Mus musculus (Mouse), this protein is Dynein regulatory complex subunit 7 (Drc7).